The primary structure comprises 244 residues: Rho-related GTP-binding protein RhoE (244 aa).

30–37 serves as a coordination point for GTP; sequence GDSQCGRT. Positions 52–60 match the Effector region motif; sequence YVPTVFENY. Residues 77–81 and 135–138 each bind GTP; these read DTSGS and CKSD. Cys241 carries the cysteine methyl ester modification. Cys241 is lipidated: S-farnesyl cysteine. The propeptide at 242–244 is removed in mature form; the sequence is TVM.

Belongs to the small GTPase superfamily. Rho family. In terms of assembly, binds ROCK1. Interacts with UBXD5.

Its subcellular location is the cell membrane. Its function is as follows. Binds GTP but lacks intrinsic GTPase activity and is resistant to Rho-specific GTPase-activating proteins. This chain is Rho-related GTP-binding protein RhoE (RND3), found in Sus scrofa (Pig).